The following is a 248-amino-acid chain: Ribosomal RNA small subunit methyltransferase J (248 aa).

S-adenosyl-L-methionine-binding positions include 101–102 (RD), 117–118 (ER), 153–154 (SS), and Asp171.

The protein belongs to the methyltransferase superfamily. RsmJ family.

It is found in the cytoplasm. The enzyme catalyses guanosine(1516) in 16S rRNA + S-adenosyl-L-methionine = N(2)-methylguanosine(1516) in 16S rRNA + S-adenosyl-L-homocysteine + H(+). Functionally, specifically methylates the guanosine in position 1516 of 16S rRNA. The chain is Ribosomal RNA small subunit methyltransferase J from Pectobacterium atrosepticum (strain SCRI 1043 / ATCC BAA-672) (Erwinia carotovora subsp. atroseptica).